We begin with the raw amino-acid sequence, 563 residues long: Methylcrotonoyl-CoA carboxylase beta chain, mitochondrial (563 aa).

The N-terminal 22 residues, 1–22, are a transit peptide targeting the mitochondrion; that stretch reads MWGALRSVLRPCSRASVPRQRA. Residues 49 to 306 enclose the CoA carboxyltransferase N-terminal domain; it reads MKALVNQLHE…QKKLDVTVEP (258 aa). The carboxyltransferase stretch occupies residues 49–555; the sequence is MKALVNQLHE…SAALNAPIQR (507 aa). Position 70 is an N6-acetyllysine; alternate (Lys70). The residue at position 70 (Lys70) is an N6-succinyllysine; alternate. Lys141 carries the N6-succinyllysine modification. Positions 309–555 constitute a CoA carboxyltransferase C-terminal domain; sequence EPLFPADELY…SAALNAPIQR (247 aa). An acyl-CoA binding region spans residues 343–372; it reads RFNEFKALYGDTLVTGFARIFGYPVGIIGN. An N6-succinyllysine modification is found at Lys433. Lys495 is modified (N6-acetyllysine; alternate). Lys495 is subject to N6-succinyllysine; alternate. N6-acetyllysine is present on Lys511.

It belongs to the AccD/PCCB family. Probably a dodecamer composed of six biotin-containing alpha subunits (MCCC1) and six beta (MCCC2) subunits.

It localises to the mitochondrion matrix. It catalyses the reaction 3-methylbut-2-enoyl-CoA + hydrogencarbonate + ATP = 3-methyl-(2E)-glutaconyl-CoA + ADP + phosphate + H(+). Its pathway is amino-acid degradation; L-leucine degradation; (S)-3-hydroxy-3-methylglutaryl-CoA from 3-isovaleryl-CoA: step 2/3. Carboxyltransferase subunit of the 3-methylcrotonyl-CoA carboxylase, an enzyme that catalyzes the conversion of 3-methylcrotonyl-CoA to 3-methylglutaconyl-CoA, a critical step for leucine and isovaleric acid catabolism. In Rattus norvegicus (Rat), this protein is Methylcrotonoyl-CoA carboxylase beta chain, mitochondrial (Mccc2).